Consider the following 434-residue polypeptide: UDP-N-acetylmuramoyl-L-alanyl-D-glutamate--2,6-diaminopimelate ligase (434 aa).

UDP-N-acetyl-alpha-D-muramoyl-L-alanyl-D-glutamate is bound at residue S17. 68–74 (GTNGKTT) is a binding site for ATP. UDP-N-acetyl-alpha-D-muramoyl-L-alanyl-D-glutamate contacts are provided by residues 111 to 112 (TT), S138, Q144, and R146. K178 is modified (N6-carboxylysine). Meso-2,6-diaminopimelate-binding positions include R326, 350–353 (DNPR), G401, and E405. The short motif at 350–353 (DNPR) is the Meso-diaminopimelate recognition motif element.

The protein belongs to the MurCDEF family. MurE subfamily. The cofactor is Mg(2+). In terms of processing, carboxylation is probably crucial for Mg(2+) binding and, consequently, for the gamma-phosphate positioning of ATP.

The protein localises to the cytoplasm. The catalysed reaction is UDP-N-acetyl-alpha-D-muramoyl-L-alanyl-D-glutamate + meso-2,6-diaminopimelate + ATP = UDP-N-acetyl-alpha-D-muramoyl-L-alanyl-gamma-D-glutamyl-meso-2,6-diaminopimelate + ADP + phosphate + H(+). Its pathway is cell wall biogenesis; peptidoglycan biosynthesis. Its function is as follows. Catalyzes the addition of meso-diaminopimelic acid to the nucleotide precursor UDP-N-acetylmuramoyl-L-alanyl-D-glutamate (UMAG) in the biosynthesis of bacterial cell-wall peptidoglycan. The chain is UDP-N-acetylmuramoyl-L-alanyl-D-glutamate--2,6-diaminopimelate ligase from Wolinella succinogenes (strain ATCC 29543 / DSM 1740 / CCUG 13145 / JCM 31913 / LMG 7466 / NCTC 11488 / FDC 602W) (Vibrio succinogenes).